Consider the following 211-residue polypeptide: Phosphoribosyl-dephospho-CoA transferase (211 aa).

Catalysis depends on residues Asp136 and Asp138.

The protein belongs to the MdcG family.

The catalysed reaction is apo-[malonate decarboxylase ACP] + 2'-(5''-triphospho-alpha-D-ribosyl)-3'-dephospho-CoA = holo-[malonate decarboxylase ACP] + diphosphate. Its function is as follows. Transfers 2'-(5-triphosphoribosyl)-3'-dephosphocoenzyme-A to the apo-[acyl-carrier-protein] of the malonate decarboxylase to yield holo-[acyl-carrier-protein]. This is Phosphoribosyl-dephospho-CoA transferase from Pseudomonas syringae pv. tomato (strain ATCC BAA-871 / DC3000).